Consider the following 202-residue polypeptide: LexA repressor (202 aa).

A DNA-binding region (H-T-H motif) is located at residues 28–48; the sequence is RAEIAQRLGFRSPNAAEEHLK. Catalysis depends on for autocatalytic cleavage activity residues Ser-119 and Lys-156.

Belongs to the peptidase S24 family. In terms of assembly, homodimer.

The enzyme catalyses Hydrolysis of Ala-|-Gly bond in repressor LexA.. Represses a number of genes involved in the response to DNA damage (SOS response), including recA and lexA. Binds to the 16 bp palindromic sequence 5'-CTGTATATATATACAG-3'. In the presence of single-stranded DNA, RecA interacts with LexA causing an autocatalytic cleavage which disrupts the DNA-binding part of LexA, leading to derepression of the SOS regulon and eventually DNA repair. This Klebsiella pneumoniae (strain 342) protein is LexA repressor.